A 309-amino-acid polypeptide reads, in one-letter code: Solute carrier family 25 member 48 (309 aa).

Solcar repeat units follow at residues 3 to 86, 99 to 209, and 218 to 305; these read VFQL…TQRL, CSML…FCNW, and PPPC…SLQF. 6 consecutive transmembrane segments (helical) span residues 9-29, 61-81, 105-125, 186-206, 218-238, and 281-299; these read FLAGWIGGASSVIVGHPLDTV, GLSFPLASITLYNSMVFGFFS, TVASMLTGLVSVGVGAPVDLV, GAMILRDIPGYALYFIPYTLF, PPPCCIWLAGGLAGSISWVTA, and ATVNAIRGFPMCATMFLGY.

The protein belongs to the mitochondrial carrier (TC 2.A.29) family.

The protein resides in the mitochondrion inner membrane. The chain is Solute carrier family 25 member 48 (slc25a48) from Danio rerio (Zebrafish).